We begin with the raw amino-acid sequence, 211 residues long: Ribosome maturation factor RimM (211 aa).

The PRC barrel domain occupies 111–182; the sequence is PDAWYDHQLV…TLVITPPLGL (72 aa). A disordered region spans residues 184 to 211; that stretch reads EEIPDEQPTPSATSDAEPGSAPEGDDAR.

This sequence belongs to the RimM family. In terms of assembly, binds ribosomal protein uS19.

It is found in the cytoplasm. Its function is as follows. An accessory protein needed during the final step in the assembly of 30S ribosomal subunit, possibly for assembly of the head region. Essential for efficient processing of 16S rRNA. May be needed both before and after RbfA during the maturation of 16S rRNA. It has affinity for free ribosomal 30S subunits but not for 70S ribosomes. This is Ribosome maturation factor RimM from Clavibacter sepedonicus (Clavibacter michiganensis subsp. sepedonicus).